The chain runs to 1103 residues: DNA polymerase delta catalytic subunit (1103 aa).

Positions 1-29 are disordered; that stretch reads MDFKRRQGPGPGVPPKRARGGLWDEDEPS. The short motif at 4-19 is the Nuclear localization signal element; that stretch reads KRRQGPGPGVPPKRAR. R19 is modified (omega-N-methylarginine). Residue K570 forms a Glycyl lysine isopeptide (Lys-Gly) (interchain with G-Cter in SUMO2) linkage. Zn(2+)-binding residues include C1008, C1011, C1022, and C1025. Residues 1008-1025 form a CysA-type zinc finger; sequence CIGCRSVINHQGAVCEFC. The [4Fe-4S] cluster site is built by C1054, C1057, C1067, and C1072. The CysB motif motif lies at 1054–1072; it reads CQRCQGSLHEDVICTSRDC.

This sequence belongs to the DNA polymerase type-B family. Component of the tetrameric DNA polymerase delta complex (Pol-delta4), which consists of POLD1/p125, POLD2/p50, POLD3/p66/p68 and POLD4/p12, with POLD1 bearing both DNA polymerase and 3' to 5' proofreading exonuclease activities. Within Pol-delta4, directly interacts with POLD2 and POLD4. Following genotoxic stress by DNA-damaging agents, such as ultraviolet light and methyl methanesulfonate, or by replication stress induced by treatment with hydroxyurea or aphidicolin, Pol-delta4 is converted into a trimeric form of the complex (Pol-delta3) by POLD4 degradation. Pol-delta3 is the major form at S phase replication sites and DNA damage sites. POLD1 displays different catalytic properties depending upon the complex it is found in. It exhibits higher proofreading activity and fidelity than Pol-delta4, making it particularly well suited to respond to DNA damage. Directly interacts with PCNA, as do POLD3 and POLD4; this interaction stimulates Pol-delta4 polymerase activity. As POLD2 and POLD4, directly interacts with WRNIP1; this interaction stimulates DNA polymerase delta-mediated DNA synthesis, independently of the presence of PCNA. This stimulation may be due predominantly to an increase of initiation frequency and also to increased processivity. Also observed as a dimeric complex with POLD2 (Pol-delta2). Pol-delta2 is relatively insensitive to the PCNA stimulation (2-5-fold) compared to Pol-delta4 that is stimulated by over 50-fold. The DNA polymerase delta complex interacts with POLDIP2; this interaction is probably mediated through direct binding to POLD2. Interacts with CIAO1. Interacts with POLDIP2. Interacts with RFC1. The cofactor is [4Fe-4S] cluster.

It localises to the nucleus. The enzyme catalyses DNA(n) + a 2'-deoxyribonucleoside 5'-triphosphate = DNA(n+1) + diphosphate. Its activity is regulated as follows. Regulated by alteration of quaternary structure. Exhibits burst rates of DNA synthesis are about 5 times faster in the presence of POLD4 (Pol-delta4 complex) than in its absence (Pol-delta3 complex), while the affinity of the enzyme for its DNA and dNTP substrates appears unchanged. The Pol-delta3 complex is more likely to proofread DNA synthesis because it cleaves single-stranded DNA twice as fast and transfers mismatched DNA from the polymerase to the exonuclease sites 9 times faster compared to the Pol-delta3 complex. Pol-delta3 also extends mismatched primers 3 times more slowly in the absence of POLD4. The conversion of Pol-delta4 into Pol-delta3 is induced by genotoxic stress or by replication stress leading POLD4 degradation. Stimulated in the presence of PCNA. This stimulation is further increased in the presence of KCTD13/PDIP1, most probably via direct interaction between KCTD13 and POLD2. Its function is as follows. As the catalytic component of the trimeric (Pol-delta3 complex) and tetrameric DNA polymerase delta complexes (Pol-delta4 complex), plays a crucial role in high fidelity genome replication, including in lagging strand synthesis, and repair. Exhibits both DNA polymerase and 3'- to 5'-exonuclease activities. Requires the presence of accessory proteins POLD2, POLD3 and POLD4 for full activity. Depending upon the absence (Pol-delta3) or the presence of POLD4 (Pol-delta4), displays differences in catalytic activity. Most notably, expresses higher proofreading activity in the context of Pol-delta3 compared with that of Pol-delta4. Although both Pol-delta3 and Pol-delta4 process Okazaki fragments in vitro, Pol-delta3 may be better suited to fulfill this task, exhibiting near-absence of strand displacement activity compared to Pol-delta4 and stalling on encounter with the 5'-blocking oligonucleotides. Pol-delta3 idling process may avoid the formation of a gap, while maintaining a nick that can be readily ligated. Along with DNA polymerase kappa, DNA polymerase delta carries out approximately half of nucleotide excision repair (NER) synthesis following UV irradiation. Under conditions of DNA replication stress, in the presence of POLD3 and POLD4, may catalyze the repair of broken replication forks through break-induced replication (BIR). Involved in the translesion synthesis (TLS) of templates carrying O6-methylguanine, 8oxoG or abasic sites. This is DNA polymerase delta catalytic subunit (POLD1) from Mesocricetus auratus (Golden hamster).